Here is a 235-residue protein sequence, read N- to C-terminus: RING-H2 finger protein ATL17 (235 aa).

A helical membrane pass occupies residues 1-21; the sequence is MLTTTILILLIVILMVSLHLY. The RING-type; atypical zinc-finger motif lies at 76–118; the sequence is CSVCLSEFKDNESGRVMPNCKHTFHVHCIDMWFHSHSSCPLCR. The segment at 143-167 is disordered; sequence VYGDTNHHEGTETTGDSVPEDSQRK.

This sequence belongs to the RING-type zinc finger family. ATL subfamily.

The protein resides in the membrane. The enzyme catalyses S-ubiquitinyl-[E2 ubiquitin-conjugating enzyme]-L-cysteine + [acceptor protein]-L-lysine = [E2 ubiquitin-conjugating enzyme]-L-cysteine + N(6)-ubiquitinyl-[acceptor protein]-L-lysine.. It participates in protein modification; protein ubiquitination. Its function is as follows. May be involved in the early steps of the plant defense signaling pathway. The sequence is that of RING-H2 finger protein ATL17 (ATL17) from Arabidopsis thaliana (Mouse-ear cress).